A 189-amino-acid polypeptide reads, in one-letter code: Transcription factor E (189 aa).

The HTH TFE/IIEalpha-type domain occupies 9 to 101; the sequence is AVKSLEIYVR…FWRIDSDTIN (93 aa).

Belongs to the TFE family. Monomer. Interaction with RNA polymerase subunits RpoF and RpoE is necessary for Tfe stimulatory transcription activity. Able to interact with Tbp and RNA polymerase in the absence of DNA promoter. Interacts both with the preinitiation and elongation complexes.

Functionally, transcription factor that plays a role in the activation of archaeal genes transcribed by RNA polymerase. Facilitates transcription initiation by enhancing TATA-box recognition by TATA-box-binding protein (Tbp), and transcription factor B (Tfb) and RNA polymerase recruitment. Not absolutely required for transcription in vitro, but particularly important in cases where Tbp or Tfb function is not optimal. It dynamically alters the nucleic acid-binding properties of RNA polymerases by stabilizing the initiation complex and destabilizing elongation complexes. Seems to translocate with the RNA polymerase following initiation and acts by binding to the non template strand of the transcription bubble in elongation complexes. The sequence is that of Transcription factor E from Aeropyrum pernix (strain ATCC 700893 / DSM 11879 / JCM 9820 / NBRC 100138 / K1).